A 461-amino-acid polypeptide reads, in one-letter code: Bifunctional protein HldE (461 aa).

Residues 1-315 (MKKILVIGDL…LILNQTHPKI (315 aa)) form a ribokinase region. 191–194 (NRTE) lines the ATP pocket. D260 is an active-site residue. The segment at 332–461 (FTNGCFDLLH…IEKIKRTCND (130 aa)) is cytidylyltransferase.

This sequence in the N-terminal section; belongs to the carbohydrate kinase PfkB family. It in the C-terminal section; belongs to the cytidylyltransferase family. As to quaternary structure, homodimer.

It carries out the reaction D-glycero-beta-D-manno-heptose 7-phosphate + ATP = D-glycero-beta-D-manno-heptose 1,7-bisphosphate + ADP + H(+). The catalysed reaction is D-glycero-beta-D-manno-heptose 1-phosphate + ATP + H(+) = ADP-D-glycero-beta-D-manno-heptose + diphosphate. The protein operates within nucleotide-sugar biosynthesis; ADP-L-glycero-beta-D-manno-heptose biosynthesis; ADP-L-glycero-beta-D-manno-heptose from D-glycero-beta-D-manno-heptose 7-phosphate: step 1/4. Its pathway is nucleotide-sugar biosynthesis; ADP-L-glycero-beta-D-manno-heptose biosynthesis; ADP-L-glycero-beta-D-manno-heptose from D-glycero-beta-D-manno-heptose 7-phosphate: step 3/4. It functions in the pathway bacterial outer membrane biogenesis; LPS core biosynthesis. In terms of biological role, catalyzes the phosphorylation of D-glycero-D-manno-heptose 7-phosphate at the C-1 position to selectively form D-glycero-beta-D-manno-heptose-1,7-bisphosphate. Its function is as follows. Catalyzes the ADP transfer from ATP to D-glycero-beta-D-manno-heptose 1-phosphate, yielding ADP-D-glycero-beta-D-manno-heptose. The protein is Bifunctional protein HldE of Helicobacter pylori (strain ATCC 700392 / 26695) (Campylobacter pylori).